The chain runs to 137 residues: Molluscan insulin-related peptide 2 (137 aa).

Positions Met1–Gly31 are cleaved as a signal peptide. Gln32 carries the post-translational modification Pyrrolidone carboxylic acid. Disulfide bonds link Cys47–Cys123, Cys59–Cys136, and Cys122–Cys127. A propeptide spans Asp71–Val83 (C-beta peptide like). Residues Asn86–Thr110 constitute a propeptide, C-alpha peptide like. The residue at position 113 (Gln113) is a Pyrrolidone carboxylic acid.

Belongs to the insulin family. Heterodimer of a B chain and an A chain linked by two disulfide bonds. Expressed in the cerebral light-green cells which are giant neuroendocrines cells involved in the control of growth.

The protein resides in the cytoplasmic vesicle. It is found in the secretory vesicle. In Lymnaea stagnalis (Great pond snail), this protein is Molluscan insulin-related peptide 2.